The following is a 3071-amino-acid chain: Intermembrane lipid transfer protein vps1301 (3071 aa).

In terms of domain architecture, Chorein N-terminal spans 2 to 115; the sequence is LEGLVAGLLN…QQALKQEQLD (114 aa). Residues 2143-2415 form the SHR-BD domain; the sequence is HIEIFSPYII…KYSWDYPCCA (273 aa).

This sequence belongs to the VPS13 family.

The protein localises to the golgi apparatus. It localises to the trans-Golgi network. In terms of biological role, mediates the transfer of lipids between membranes at organelle contact sites. May play a role in mitochondrial lipid homeostasis, Golgi vesicle transport, reticulophagy, actin cytoskeleton organization and formation of the forespore membrane. The protein is Intermembrane lipid transfer protein vps1301 of Schizosaccharomyces pombe (strain 972 / ATCC 24843) (Fission yeast).